Reading from the N-terminus, the 471-residue chain is Secretogranin-3 (471 aa).

The first 22 residues, 1 to 22 (MGFLWTGSWILVLVLNSGPIQA), serve as a signal peptide directing secretion. 3 disordered regions span residues 24–45 (PKPE…ERPL), 89–108 (TVEK…QLNV), and 345–404 (KLEK…TDEA). Positions 28-45 (GSQDKSLHNRELSAERPL) are enriched in basic and acidic residues. At S40 the chain carries Phosphoserine. An O-linked (Xyl...) (chondroitin sulfate) serine glycan is attached at S40. 2 stretches are compositionally biased toward basic and acidic residues: residues 345-355 (KLEKNTTDSKS) and 364-404 (KSQE…TDEA). At S365 the chain carries Phosphoserine.

As to quaternary structure, interacts with CHGA. Interacts with secretogranin II/SCG2. Interacts (via C-terminus) with CPE. As to expression, expressed in various brain areas, with highest levels in the arcuate nucleus and the lateral hypothalamic area, as well as the paraventricular nucleus and the ventromedial hypothalamus (at protein level).

It is found in the cytoplasmic vesicle. Its subcellular location is the secretory vesicle. The protein localises to the secretory vesicle membrane. The protein resides in the secreted. Functionally, member of the granin protein family that regulates the biogenesis of secretory granules. Acts as a sorting receptor for intragranular proteins including chromogranin A/CHGA. May also play a role in angiogenesis. Promotes endothelial proliferation, migration and tube formation through MEK/ERK signaling pathway. This chain is Secretogranin-3 (Scg3), found in Mus musculus (Mouse).